The following is a 216-amino-acid chain: ADP-ribosylation factor D (216 aa).

The span at 188 to 204 (SKFSFSNKSKQQKSNSQ) shows a compositional bias: low complexity. Positions 188–216 (SKFSFSNKSKQQKSNSQPNTPRKNIQMMT) are disordered. Over residues 205–216 (PNTPRKNIQMMT) the composition is skewed to polar residues.

This sequence belongs to the small GTPase superfamily. Arf family.

It localises to the golgi apparatus. Its function is as follows. GTP-binding protein involved in protein trafficking; may modulate vesicle budding and uncoating within the Golgi apparatus. The polypeptide is ADP-ribosylation factor D (arrD) (Dictyostelium discoideum (Social amoeba)).